We begin with the raw amino-acid sequence, 521 residues long: AAA ATPase forming ring-shaped complexes (521 aa).

Residues 4–44 (TEDLAALNDRLMAKNHALAEALNRAGKELTKAKSRLAQLAQ) are a coiled coil. An ATP-binding site is contributed by 235 to 240 (GNGKTM).

It belongs to the AAA ATPase family. In terms of assembly, homohexamer. Assembles into a hexameric ring structure.

The protein is AAA ATPase forming ring-shaped complexes of Bifidobacterium longum subsp. infantis (strain ATCC 15697 / DSM 20088 / JCM 1222 / NCTC 11817 / S12).